The following is a 120-amino-acid chain: NAD(P)H-quinone oxidoreductase subunit 3 (120 aa).

Helical transmembrane passes span 10–30, 64–84, and 89–109; these read FLGF…TNLI, MFAL…PWAV, and LGLL…IALA.

Belongs to the complex I subunit 3 family. As to quaternary structure, NDH-1 can be composed of about 15 different subunits; different subcomplexes with different compositions have been identified which probably have different functions.

The protein resides in the cellular thylakoid membrane. The catalysed reaction is a plastoquinone + NADH + (n+1) H(+)(in) = a plastoquinol + NAD(+) + n H(+)(out). It catalyses the reaction a plastoquinone + NADPH + (n+1) H(+)(in) = a plastoquinol + NADP(+) + n H(+)(out). Functionally, NDH-1 shuttles electrons from an unknown electron donor, via FMN and iron-sulfur (Fe-S) centers, to quinones in the respiratory and/or the photosynthetic chain. The immediate electron acceptor for the enzyme in this species is believed to be plastoquinone. Couples the redox reaction to proton translocation, and thus conserves the redox energy in a proton gradient. Cyanobacterial NDH-1 also plays a role in inorganic carbon-concentration. In Prochlorococcus marinus (strain MIT 9215), this protein is NAD(P)H-quinone oxidoreductase subunit 3.